The following is a 159-amino-acid chain: Vasotocin-neurophysin VT (159 aa).

Positions 1 to 17 (TAPVPACFLCLLALSSA) are cleaved as a signal peptide. Residues cysteine 18 and cysteine 23 are joined by a disulfide bond. Glycine 26 bears the Glycine amide mark. 7 cysteine pairs are disulfide-bonded: cysteine 39–cysteine 83, cysteine 42–cysteine 56, cysteine 50–cysteine 73, cysteine 57–cysteine 63, cysteine 90–cysteine 102, cysteine 96–cysteine 114, and cysteine 103–cysteine 108. N-linked (GlcNAc...) asparagine glycosylation occurs at asparagine 129.

Belongs to the vasopressin/oxytocin family. In terms of processing, seven disulfide bonds are present in neurophysin.

It localises to the secreted. Vasotocin is an antidiuretic hormone. The chain is Vasotocin-neurophysin VT from Bufo japonicus (Japanese common toad).